The following is a 328-amino-acid chain: DNA repair protein RAD51 homolog 4 (328 aa).

The interval 1-83 (MGVLRVGLCP…ELKTSTAILS (83 aa)) is preferentially binds ssDNA. 107–114 (GGPGSGKT) is an ATP binding site.

It belongs to the RecA family. RAD51 subfamily. Part of the BCDX2 complex consisting of RAD51B, RAD51C, RAD51D and XRCC2; the complex has a ring-like structure arranged into a flat disc around a central channel. In the absence of DNA, the BCDX2 subcomplex XRCC2:RAD51D formed a multimeric ring structure; in the presence of single-stranded DNA it formed a filamentous structure with the ssDNA. Interacts with SWSAP1 and ZSWIM7; involved in homologous recombination repair. Interacts with BLM; required for stimulation of BLM activity by the BCDX2 subcomplex XRCC2:RAD51D. In terms of tissue distribution, expressed in colon, prostate, spleen, testis, ovary, thymus and small intestine. Weakly expressed in leukocytes.

It is found in the nucleus. Its subcellular location is the cytoplasm. The protein localises to the cytoskeleton. The protein resides in the microtubule organizing center. It localises to the centrosome. It is found in the chromosome. Its subcellular location is the telomere. In terms of biological role, involved in the homologous recombination repair (HRR) pathway of double-stranded DNA breaks arising during DNA replication or induced by DNA-damaging agents. Bind to single-stranded DNA (ssDNA) and has DNA-dependent ATPase activity. Part of the RAD51 paralog protein complex BCDX2 which acts in the BRCA1-BRCA2-dependent HR pathway. Upon DNA damage, BCDX2 acts downstream of BRCA2 recruitment and upstream of RAD51 recruitment. BCDX2 binds predominantly to the intersection of the four duplex arms of the Holliday junction and to junction of replication forks. The BCDX2 complex was originally reported to bind single-stranded DNA, single-stranded gaps in duplex DNA and specifically to nicks in duplex DNA. Involved in telomere maintenance. The BCDX2 subcomplex XRCC2:RAD51D can stimulate Holliday junction resolution by BLM. This Homo sapiens (Human) protein is DNA repair protein RAD51 homolog 4 (RAD51D).